We begin with the raw amino-acid sequence, 245 residues long: Probable histone chaperone asf-1-like protein (245 aa).

Residues 157 to 166 (EDPVAEPVDE) are compositionally biased toward acidic residues. A disordered region spans residues 157–245 (EDPVAEPVDE…SGDVEMGDKH (89 aa)). Residues 167 to 183 (EANKVFDEDDLMPLHDD) are compositionally biased toward basic and acidic residues. A compositionally biased stretch (acidic residues) spans 184–206 (GQDDDEEEEDDDETGPNTEEVDL). Residues 215–245 (ANAHDGTEQKNGEESMEHDGASGDVEMGDKH) show a composition bias toward basic and acidic residues.

Belongs to the ASF1 family. In terms of assembly, interacts with histone H3 and histone H4.

It localises to the nucleus. In terms of biological role, histone chaperone that facilitates histone deposition and histone exchange and removal during nucleosome assembly and disassembly. This Caenorhabditis elegans protein is Probable histone chaperone asf-1-like protein (asfl-1).